A 98-amino-acid chain; its full sequence is Large ribosomal subunit protein uL23 (98 aa).

It belongs to the universal ribosomal protein uL23 family. In terms of assembly, part of the 50S ribosomal subunit. Contacts protein L29, and trigger factor when it is bound to the ribosome.

One of the early assembly proteins it binds 23S rRNA. One of the proteins that surrounds the polypeptide exit tunnel on the outside of the ribosome. Forms the main docking site for trigger factor binding to the ribosome. In Rickettsia bellii (strain OSU 85-389), this protein is Large ribosomal subunit protein uL23.